Reading from the N-terminus, the 1515-residue chain is Homeobox protein cut-like 1 (1515 aa).

Residues 56–361 adopt a coiled-coil conformation; it reads LLKSFQGEID…VKKELNTLKS (306 aa). Polar residues predominate over residues 393-405; sequence ENATLRISNSDLS. Disordered regions lie at residues 393 to 453, 509 to 546, 644 to 666, and 680 to 702; these read ENAT…SPAG, PYSTNSISSPSPLQQSPDVNGMAPSPSQSESAGSISEG, PKRRNRSEGNITTRIRASETGSD, and LQVQKTAEPVQTSSTSSSGNSDD. Pro residues predominate over residues 422–432; it reads GPLPASPPPQL. Ser-427 is modified (phosphoserine). Residues 436–447 are compositionally biased toward polar residues; the sequence is TGEQVSNTNGTH. Residues 514 to 544 are compositionally biased toward low complexity; it reads SISSPSPLQQSPDVNGMAPSPSQSESAGSIS. A DNA-binding region (CUT 1) is located at residues 540–627; the sequence is AGSISEGEEI…ILALRSIQGR (88 aa). Position 761 is a phosphoserine (Ser-761). 2 disordered regions span residues 769 to 871 and 884 to 923; these read PETS…SASA and YSQSSELSLTGASRSETPQNSPLPSSPIVPMAKPAKPSVP. Glycyl lysine isopeptide (Lys-Gly) (interchain with G-Cter in SUMO2) cross-links involve residues Lys-783, Lys-809, and Lys-840. Residues 828–852 are compositionally biased toward basic and acidic residues; it reads PERRNLTSSEETKADETTASGKERA. Polar residues-rich tracts occupy residues 853–868 and 884–906; these read GSSQPRAERSQLQGPS and YSQSSELSLTGASRSETPQNSPL. Ser-904 is subject to Phosphoserine. Positions 929-1016 form a DNA-binding region, CUT 2; it reads QYEVYMYQEV…QGVLPVQGQQ (88 aa). Residues 1032 to 1044 show a composition bias toward polar residues; that stretch reads QQGCVSSESTPKT. A disordered region spans residues 1032–1105; it reads QQGCVSSEST…QPTTPLPLSG (74 aa). Over residues 1045 to 1061 the composition is skewed to low complexity; sequence SASCSPAPESPMSSSES. Ser-1054 and Ser-1064 each carry phosphoserine. Positions 1112–1199 form a DNA-binding region, CUT 3; the sequence is QELVAMSPEL…VEKLMDMKRM (88 aa). The tract at residues 1207-1242 is disordered; sequence RRHSSVSDSQPCEPPSVGIDYSQGASPQPQHQLKKP. Residues 1239-1298 constitute a DNA-binding region (homeobox); sequence LKKPRVVLAPEEKEALKRAYQQKPYPSPKTIEELATQLNLKTSTVINWFHNYRSRIRREL. Ser-1265 is modified (phosphoserine). Residue Lys-1279 forms a Glycyl lysine isopeptide (Lys-Gly) (interchain with G-Cter in SUMO2) linkage. Residues 1307-1488 are disordered; it reads SQGQAGASDS…AGARDNPVRK (182 aa). The span at 1313 to 1328 shows a compositional bias: low complexity; sequence ASDSPSARSSRAAPSS. The span at 1331-1343 shows a compositional bias: acidic residues; the sequence is DSCDGVEATDAEE. A Phosphoserine modification is found at Ser-1332. Residues 1365-1378 are compositionally biased toward basic and acidic residues; it reads ADREEATQPAEKAK. Positions 1406-1468 are enriched in low complexity; the sequence is ADAPAPVPSL…ANAPARRPSS (63 aa). 3 positions are modified to phosphoserine: Ser-1468, Ser-1496, and Ser-1506.

It belongs to the CUT homeobox family. In terms of assembly, interacts with BANP. Interacts with SATB1 (via DNA-binding domains); the interaction inhibits the attachment of both proteins to DNA. In terms of processing, phosphorylated by PKA. Post-translationally, as cells progress into S phase, a fraction of CUX1 molecules is proteolytically processed into N-terminally truncated proteins of 110 kDa by CTSL. Cell cycle-dependent processing of CUX1 serves to generate a CDP/Cux p110 with distinct DNA binding and transcriptional properties. As to expression, testis-specific where it is expressed in germ cells.

It is found in the nucleus. Transcription factor involved in the control of neuronal differentiation in the brain. Regulates dendrite development and branching, and dendritic spine formation in cortical layers II-III. Also involved in the control of synaptogenesis. In addition, it has probably a broad role in mammalian development as a repressor of developmentally regulated gene expression. May act by preventing binding of positively-activing CCAAT factors to promoters. Component of nf-munr repressor; binds to the matrix attachment regions (MARs) (5' and 3') of the immunoglobulin heavy chain enhancer. Represses T-cell receptor (TCR) beta enhancer function by binding to MARbeta, an ATC-rich DNA sequence located upstream of the TCR beta enhancer. Binds to the TH enhancer; may require the basic helix-loop-helix protein TCF4 as a coactivator. Functionally, plays a role in cell cycle progression, in particular at the G1/S transition. As cells progress into S phase, a fraction of CUX1 molecules is proteolytically processed into N-terminally truncated proteins of 110 kDa. While CUX1 only transiently binds to DNA and carries the CCAAT-displacement activity, CDP/Cux p110 makes a stable interaction with DNA and stimulates expression of genes such as POLA1. The polypeptide is Homeobox protein cut-like 1 (Mus musculus (Mouse)).